Here is a 74-residue protein sequence, read N- to C-terminus: MKWVQKAIKRPGRVHRYLMRLYGKRAFTKDGDIKASYLDKAIKHVKKAKIPKEKKRSLLSALLLAKRLKRMHRK.

The protein resides in the virion. Its function is as follows. This extremely basic protein may tightly bind to SSV1 DNA. Essential for virus function. This chain is Capsid protein VP2 (VP2), found in Saccharolobus solfataricus (Sulfolobus solfataricus).